We begin with the raw amino-acid sequence, 665 residues long: mRNA cleavage and polyadenylation factor CLP1 (665 aa).

Residues Lys91 and 195 to 200 (SAGKTS) contribute to the ATP site. 2 disordered regions span residues 218–283 (VKEG…SQAK) and 593–615 (PPPRNQSKDETSSPDDPGHHDYE). 2 stretches are compositionally biased toward basic and acidic residues: residues 219 to 238 (KEGDDASRRAKHRSEPEIHP) and 598 to 614 (QSKDETSSPDDPGHHDY).

The protein belongs to the Clp1 family. Clp1 subfamily. In terms of assembly, component of a pre-mRNA cleavage factor complex. Interacts directly with PCF11.

The protein resides in the nucleus. Its function is as follows. Required for endonucleolytic cleavage during polyadenylation-dependent pre-mRNA 3'-end formation. The polypeptide is mRNA cleavage and polyadenylation factor CLP1 (Malassezia globosa (strain ATCC MYA-4612 / CBS 7966) (Dandruff-associated fungus)).